The chain runs to 864 residues: Protein PAT1 homolog 1 (864 aa).

Residues 427–439 (PPNSRPNGPQFSG) are compositionally biased toward polar residues. Disordered regions lie at residues 427-460 (PPNS…SGMP), 518-539 (WTAH…SRKD), and 551-602 (EMQK…STHN). Positions 551-580 (EMQKERLRDREKERQRERQERIDRGEERKP) are enriched in basic and acidic residues.

This sequence belongs to the PAT1 family.

Its subcellular location is the cytoplasm. It localises to the P-body. Functionally, RNA-binding protein involved in deadenylation-dependent decapping of mRNAs, leading to the degradation of mRNAs. Acts as a scaffold protein that connects deadenylation and decapping machinery. Required for the recruitment of P-body components such as cgh-1 in somatic blastomeres. May play a role in recruiting the decapping enzyme dcap-1 to cytoplasmic puncta in the cell body of the posterior touch receptor neuron, PLM. This is Protein PAT1 homolog 1 (patr-1) from Caenorhabditis briggsae.